Consider the following 222-residue polypeptide: Recombination protein RecR (222 aa).

A C4-type zinc finger spans residues 57–72; sequence CPVCFNITDAERCDVC. One can recognise a Toprim domain in the interval 80–173; sequence SVICVVEEPG…VVSRIAYGLP (94 aa). Residues 189–222 are disordered; that stretch reads ALSGRRRVSEPASPPPPRRNDEEQDGAPARPPSH.

The protein belongs to the RecR family.

In terms of biological role, may play a role in DNA repair. It seems to be involved in an RecBC-independent recombinational process of DNA repair. It may act with RecF and RecO. This is Recombination protein RecR from Deinococcus geothermalis (strain DSM 11300 / CIP 105573 / AG-3a).